Consider the following 443-residue polypeptide: Protein PRRC1 (443 aa).

Disordered regions lie at residues 1-108 (MMEE…LSHF) and 139-206 (ITRG…QDDA). The span at 34–46 (VTSSFSSPNTSGM) shows a compositional bias: polar residues. The segment covering 59–80 (PSLPPVQPSAPPPFVPLSPAPS) has biased composition (pro residues). Residues 81–96 (TPLSGTSVPPSVSPSP) show a composition bias toward low complexity. Residues 169–188 (ITQQASMTSLAQGPGTTSAI) show a composition bias toward polar residues.

The protein belongs to the PRRC1 family. In terms of assembly, interacts with PRKAR1A; resulting in PKA activation.

It is found in the golgi apparatus. The protein localises to the cytoplasm. Its function is as follows. May act as a regulator of the protein kinase A (PKA) during embryonic development. This is Protein PRRC1 (Prrc1) from Rattus norvegicus (Rat).